The chain runs to 134 residues: Terepressin/terephysin (134 aa).

Residues 1–33 form the signal peptide; it reads MKCSVLPRSRLSWTMCVLLLPLLMLMLEGGVQG. An intrachain disulfide couples C34 to C39. The propeptide occupies 44-50; it reads KRAVDSV. 7 disulfides stabilise this stretch: C56–C100, C59–C73, C67–C90, C74–C80, C107–C121, C115–C133, and C122–C127.

It belongs to the vasopressin/oxytocin family. In terms of processing, contains 7 disulfide bonds. In terms of tissue distribution, expressed by the venom duct.

It localises to the secreted. The protein is Terepressin/terephysin of Terebra subulata (Chocolate spotted auger).